The sequence spans 130 residues: Small ribosomal subunit protein uS8 (130 aa).

The protein belongs to the universal ribosomal protein uS8 family. As to quaternary structure, part of the 30S ribosomal subunit. Contacts proteins S5 and S12.

Its function is as follows. One of the primary rRNA binding proteins, it binds directly to 16S rRNA central domain where it helps coordinate assembly of the platform of the 30S subunit. The protein is Small ribosomal subunit protein uS8 of Vibrio campbellii (strain ATCC BAA-1116).